Here is a 187-residue protein sequence, read N- to C-terminus: Elongation factor P (187 aa).

An N6-(3,6-diaminohexanoyl)-5-hydroxylysine modification is found at lysine 34.

The protein belongs to the elongation factor P family. May be beta-lysylated on the epsilon-amino group of Lys-34 by the combined action of EpmA and EpmB, and then hydroxylated on the C5 position of the same residue by EpmC (if this protein is present). Lysylation is critical for the stimulatory effect of EF-P on peptide-bond formation. The lysylation moiety may extend toward the peptidyltransferase center and stabilize the terminal 3-CCA end of the tRNA. Hydroxylation of the C5 position on Lys-34 may allow additional potential stabilizing hydrogen-bond interactions with the P-tRNA.

Its subcellular location is the cytoplasm. Its pathway is protein biosynthesis; polypeptide chain elongation. Its function is as follows. Involved in peptide bond synthesis. Alleviates ribosome stalling that occurs when 3 or more consecutive Pro residues or the sequence PPG is present in a protein, possibly by augmenting the peptidyl transferase activity of the ribosome. Modification of Lys-34 is required for alleviation. The polypeptide is Elongation factor P (Vesicomyosocius okutanii subsp. Calyptogena okutanii (strain HA)).